The sequence spans 478 residues: Alpha-(1,3)-fucosyltransferase FucT (478 aa).

Substrate contacts are provided by residues G94, 186 to 189 (VASN), R195, 222 to 225 (VKNK), N240, and 246 to 250 (YVTEK). Residues 347 to 353 (DNPFIFC) form an important for acceptor specificity region. A run of 10 repeats spans residues 364-370 (DDLRVNY), 371-377 (DDLRVNY), 378-384 (DDLRINY), 385-391 (DDLRVNY), 392-398 (DDLRINY), 399-405 (DDLRVNY), 406-412 (DDLRVNY), 413-419 (DDLRINY), 420-426 (DDLRVNY), and 427-433 (DDLRVNY). The segment at 364 to 433 (DDLRVNYDDL…VNYDDLRVNY (70 aa)) is 10 X 7 AA tandem repeat of D-D-L-R-[IV]-N-Y. Residues 434–478 (ERLLSKATPLLELSQNTTSKIYRKAYQKSLPLLRAIRRWVKKLGL) form a may be involved in membrane binding region.

Belongs to the glycosyltransferase 10 family. As to quaternary structure, homodimer.

The protein localises to the membrane. It localises to the cytoplasm. The enzyme catalyses a beta-D-galactosyl-(1-&gt;4)-N-acetyl-beta-D-glucosaminyl derivative + GDP-beta-L-fucose = a beta-D-galactosyl-(1-&gt;4)-[alpha-L-fucosyl-(1-&gt;3)]-N-acetyl-beta-D-glucosaminyl derivative + GDP + H(+). It functions in the pathway lipopolysaccharide biosynthesis; LPS oligosaccharide biosynthesis. Functionally, involved in the biosynthesis of the Lewis X (LeX) trisaccharide of the lipopolysaccharide (LPS) O-antigen. Catalyzes the addition of fucose in alpha 1-3 linkage to Gal-beta-1-4-GlcNAc-beta-O-R (LacNAc-R) type II acceptor. The chain is Alpha-(1,3)-fucosyltransferase FucT from Helicobacter pylori (Campylobacter pylori).